Here is a 201-residue protein sequence, read N- to C-terminus: Peptide deformylase 2 (201 aa).

Residues Cys-121 and His-163 each contribute to the Fe cation site. Residue Glu-164 is part of the active site. His-167 is a binding site for Fe cation.

Belongs to the polypeptide deformylase family. The cofactor is Fe(2+).

The catalysed reaction is N-terminal N-formyl-L-methionyl-[peptide] + H2O = N-terminal L-methionyl-[peptide] + formate. Removes the formyl group from the N-terminal Met of newly synthesized proteins. Requires at least a dipeptide for an efficient rate of reaction. N-terminal L-methionine is a prerequisite for activity but the enzyme has broad specificity at other positions. The sequence is that of Peptide deformylase 2 from Prochlorococcus marinus (strain MIT 9313).